Here is a 182-residue protein sequence, read N- to C-terminus: Vacuolar protein sorting-associated protein 29 (182 aa).

Lysine 50 bears the N6-acetyllysine mark.

Belongs to the VPS29 family. Component of the commander complex consisting of the CCC subcomplex and the retriever subcomplex. Component of the heterotrimeric retriever complex formed by VPS26C, VPS29 and VPS35L; within the complex interacts with VPS35L. Component of the heterotrimeric retromer cargo-selective complex (CSC), also described as vacuolar protein sorting subcomplex (VPS), formed by VPS26 (VPS26A or VPS26B), VPS29 and VPS35. The CSC has a highly elongated structure with VPS26 and VPS29 binding independently at opposite distal ends of VPS35 as central platform. The CSC is believed to associate with variable sorting nexins to form functionally distinct retromer complex variants. The originally described retromer complex (also called SNX-BAR retromer) is a pentamer containing the CSC and a heterodimeric membrane-deforming subcomplex formed between SNX1 or SNX2 and SNX5 or SNX6 (also called SNX-BAR subcomplex); the respective CSC and SNX-BAR subcomplexes associate with low affinity. The CSC associates with SNX3 to form a SNX3-retromer complex. The CSC associates with SNX27, the WASH complex and the SNX-BAR subcomplex to form the SNX27-retromer complex. Interacts with VPS26A, VPS35, SNX1, SNX2, SNX3, SNX27, WASHC5. Interacts with TBC1D5; this interaction is blocked by VPS35L in the retriever complex. Interacts with SNX17; the interaction is indirect; SNX17 (via its C-terminus) interacts with the retriever complex (via VPS26C and VPS35L). Interacts with VPS26B and ANKRD27.

Its subcellular location is the cytoplasm. It is found in the membrane. It localises to the endosome membrane. The protein localises to the early endosome. The protein resides in the late endosome. Functionally, component of the commander complex that is essential for endosomal recycling of transmembrane cargos; the commander complex is composed of the CCC subcomplex and the retriever subcomplex. Component of the retriever complex, which is a heterotrimeric complex related to retromer cargo-selective complex (CSC) and essential for retromer-independent retrieval and recycling of numerous cargos such as integrin alpha-5/beta-1 (ITGA5:ITGB1). Component of the retromer cargo-selective complex (CSC). The CSC is believed to be the core functional component of retromer or respective retromer complex variants acting to prevent missorting of selected transmembrane cargo proteins into the lysosomal degradation pathway. The recruitment of the CSC to the endosomal membrane involves RAB7A and SNX3. The SNX-BAR retromer mediates retrograde transport of cargo proteins from endosomes to the trans-Golgi network (TGN) and is involved in endosome-to-plasma membrane transport for cargo protein recycling. The SNX3-retromer mediates the retrograde endosome-to-TGN transport of WLS distinct from the SNX-BAR retromer pathway. The SNX27-retromer is believed to be involved in endosome-to-plasma membrane trafficking and recycling of a broad spectrum of cargo proteins. The CSC seems to act as recruitment hub for other proteins, such as the WASH complex and TBC1D5. Required to regulate transcytosis of the polymeric immunoglobulin receptor (pIgR-pIgA). In the endosomes, retriever complex drives the retrieval and recycling of NxxY-motif-containing cargo proteins by coupling to SNX17, a cargo essential for the homeostatic maintenance of numerous cell surface proteins associated with processes that include cell migration, cell adhesion, nutrient supply and cell signaling. The recruitment of the retriever complex to the endosomal membrane involves CCC and WASH complexes. Involved in GLUT1 endosome-to-plasma membrane trafficking; the function is dependent of association with ANKRD27. The polypeptide is Vacuolar protein sorting-associated protein 29 (Rattus norvegicus (Rat)).